Here is a 1406-residue protein sequence, read N- to C-terminus: Enhancer of mRNA-decapping protein 4 (1406 aa).

Position 2 is an N-acetylalanine (Ala2). Phosphoserine occurs at positions 3 and 6. Lys125 carries the N6-acetyllysine modification. WD repeat units follow at residues 174 to 214 (GFTG…GKIQ), 230 to 277 (NHFR…SSHN), 295 to 334 (GHST…QDEP), and 342 to 393 (PHDG…CLQT). Phosphoserine occurs at positions 560, 565, 583, and 585. Disordered regions lie at residues 604–631 (SLQQ…SSSS) and 667–686 (SLTL…SLLP). Low complexity predominate over residues 609–631 (SASPSSSSSSSSSSSSSSSSSSS). Phosphoserine occurs at positions 680, 712, 727, and 729. A disordered region spans residues 719-744 (EPLGLPQASPSRTRSPDVISSASTAL). A compositionally biased stretch (polar residues) spans 726 to 744 (ASPSRTRSPDVISSASTAL). Thr731 carries the post-translational modification Phosphothreonine. 2 positions are modified to phosphoserine: Ser733 and Ser745. 2 disordered regions span residues 782–855 (HLLS…NGLQ) and 873–951 (QRDS…VAEP). Polar residues-rich tracts occupy residues 823–832 (EVATPDSQVW) and 841–852 (ETCSTLTESPRN). Thr826 is modified (phosphothreonine). Phosphoserine occurs at positions 849 and 876. Thr879 is subject to Phosphothreonine. Phosphoserine is present on residues Ser880, Ser884, Ser892, Ser895, and Ser897. Phosphothreonine is present on Thr906. Residues 971-1030 (HNQEELLQRLCAQLEGLQSTVTDHVERALETRHEQEQRRLERALAEGQQRGGQLQEQLTQ) are a coiled coil. Ser1385 carries the phosphoserine modification.

Belongs to the WD repeat EDC4 family. In terms of assembly, part of a decapping complex consisting of DCP1A, DCP2, EDC3, EDC4 and probably DDX6. Part of a complex consisting of DCP1A, EDC3, EDC4 and DDX6. Part of a complex consisting of DCP1B, EDC3, EDC4 and DDX6. Interacts with DCP2. Interacts with RC3H1. Interacts with NBDY. Interacts with Tex19.1 and, probably, Tex19.2. Interacts with LSM14A. Interacts with DDX6.

It is found in the cytoplasm. The protein localises to the P-body. Its subcellular location is the nucleus. Functionally, in the process of mRNA degradation, seems to play a role in mRNA decapping. Component of a complex containing DCP2 and DCP1A which functions in decapping of ARE-containing mRNAs. Promotes complex formation between DCP1A and DCP2. Enhances the catalytic activity of DCP2 (in vitro). The protein is Enhancer of mRNA-decapping protein 4 of Mus musculus (Mouse).